A 743-amino-acid polypeptide reads, in one-letter code: MTIPNTIPITPELIAGHGLKPDEYQRILDLIGREPTFTELGIFSAMWNEHCSYKSSKKWLRTLPTKGPRVIQGPGENAGVVDIDDGDCVVFKMESHNHPSYIEPYQGAATGVGGILRDVFTMGARPIAAMNALRFGEPDHPKTRHLVSGVVSGVGGYGNSFGVPTVGGEVEFDARYNGNILVNAFAAGIAKSNAIFLSEAKGVGLPVVYLGAKTGRDGVGGATMASAEFDESIEEKRPTVQVGDPFTEKCLLEACLELMQTGAVIAIQDMGAAGLTCSAVEMGAKGDLGILLELDKVPVREERMTAYEMMLSESQERMLMVLQPEKEEQAKAIFVKWGLDFAIVGKTTDDLRFRVVHQGEEVANLPIKDLGDQAPEYDRPWRESGKPAPLPANLVAAPKNYGQALLQLVGSANQSSRRWVYEQYDTLIQGNSLQLPGGDAGVVRVDGHKSKALAFSSDVTPRYVEADPFEGGKQAVAECWRNITATGAEPLAATDNLNFGNPEKPEIMGQFVQAVKGIGEACRALDFPIVSGNVSLYNETNGVAILPTPTIAGVGLLPDWSKMARIGSANDGDKVIMIGLDGSHLGQSVYLRDVLDSREGPAPEVDLFAERRNGDFVRSVIRNDQATACHDISSGGLAVALAEMAMASGKGLTIDLGECKGAPHALLFGEDQARYVLTVPADVADFVCVNAEGAGVPFRRLGTVGGDALVVDDLITLPIQQLRDTHESWFPDFMEGRGELAAE.

Histidine 50 is a catalytic residue. ATP is bound by residues tyrosine 53 and lysine 92. Residue glutamate 94 participates in Mg(2+) binding. Substrate-binding positions include 95–98 and arginine 117; that span reads SHNH. Residue histidine 96 is the Proton acceptor of the active site. Position 118 (aspartate 118) interacts with Mg(2+). Substrate is bound at residue glutamine 241. Aspartate 269 provides a ligand contact to Mg(2+). 313-315 is a substrate binding site; sequence ESQ. ATP-binding residues include aspartate 495 and glycine 532. Asparagine 533 contributes to the Mg(2+) binding site. A substrate-binding site is contributed by serine 535.

This sequence belongs to the FGAMS family. Monomer. Part of the FGAM synthase complex composed of 1 PurL, 1 PurQ and 2 PurS subunits.

The protein localises to the cytoplasm. The enzyme catalyses N(2)-formyl-N(1)-(5-phospho-beta-D-ribosyl)glycinamide + L-glutamine + ATP + H2O = 2-formamido-N(1)-(5-O-phospho-beta-D-ribosyl)acetamidine + L-glutamate + ADP + phosphate + H(+). Its pathway is purine metabolism; IMP biosynthesis via de novo pathway; 5-amino-1-(5-phospho-D-ribosyl)imidazole from N(2)-formyl-N(1)-(5-phospho-D-ribosyl)glycinamide: step 1/2. In terms of biological role, part of the phosphoribosylformylglycinamidine synthase complex involved in the purines biosynthetic pathway. Catalyzes the ATP-dependent conversion of formylglycinamide ribonucleotide (FGAR) and glutamine to yield formylglycinamidine ribonucleotide (FGAM) and glutamate. The FGAM synthase complex is composed of three subunits. PurQ produces an ammonia molecule by converting glutamine to glutamate. PurL transfers the ammonia molecule to FGAR to form FGAM in an ATP-dependent manner. PurS interacts with PurQ and PurL and is thought to assist in the transfer of the ammonia molecule from PurQ to PurL. The protein is Phosphoribosylformylglycinamidine synthase subunit PurL of Rhizobium etli (strain CIAT 652).